An 830-amino-acid chain; its full sequence is ABC transporter G family member STR (830 aa).

Topologically, residues 1 to 551 (MAKFKRTDTN…RTTLNVIRTP (551 aa)) are cytoplasmic. The ABC transporter domain maps to 46-297 (LEFNNLSYSV…LAGFARPVPD (252 aa)). Residue 90–97 (GPSGAGKS) coordinates ATP. Disordered stretches follow at residues 333–356 (DQAA…PYAK), 368–422 (SHFS…SMQS), and 471–491 (SMSS…NKTP). Polar residues predominate over residues 368-378 (SHFSTGNMNSQ). A compositionally biased stretch (acidic residues) spans 395-405 (DYEDDDDEDEF). The segment covering 471–483 (SMSSSQFSMTQQT) has biased composition (low complexity). Residues 552 to 572 (ELFLSREIVLTVMGLVLSSFF) form a helical membrane-spanning segment. Over 573-588 (KKLSHFDFKTINHLLN) the chain is Extracellular. A helical transmembrane segment spans residues 589–609 (FYIFTICLVFFSSNDAVPTFI). The Cytoplasmic segment spans residues 610–630 (QERFIFIRETSHNAYRASSYV). The chain crosses the membrane as a helical span at residues 631–651 (ISSLIVYLPFFAIQGFTFAGI). Residues 652-661 (TQYILHLNSS) lie on the Extracellular side of the membrane. A glycan (N-linked (GlcNAc...) asparagine) is linked at N659. Residues 662–682 (ILSFWLILYSSLVTSNAYVML) form a helical membrane-spanning segment. The Cytoplasmic segment spans residues 683–690 (VSALVPSY). The chain crosses the membrane as a helical span at residues 691 to 711 (ITGYAVVIATTALFFLTCGFF). The Extracellular segment spans residues 712–798 (LKRTQIPLVW…LFSMDIREEN (87 aa)). N-linked (GlcNAc...) asparagine glycans are attached at residues N771 and N780. Residues 799–819 (IWLDIVILLAWGVLYRLFFYV) form a helical membrane-spanning segment. Topologically, residues 820-830 (VLRFYSKNERK) are cytoplasmic.

The protein belongs to the ABC transporter superfamily. ABCG family. Stunted arbuscule (STR) subfamily. In terms of assembly, heterodimerizes with STR2; the resulting transporter is located in the peri-arbuscular membrane.

The protein resides in the cell membrane. Functionally, together with STR2, required for arbuscule development in arbuscular mycorrhizal (AM) symbiosis. In Petunia hybrida (Petunia), this protein is ABC transporter G family member STR.